A 507-amino-acid chain; its full sequence is ATP synthase subunit alpha, chloroplastic (507 aa).

170–177 (GDRQTGKT) is a binding site for ATP.

This sequence belongs to the ATPase alpha/beta chains family. In terms of assembly, F-type ATPases have 2 components, CF(1) - the catalytic core - and CF(0) - the membrane proton channel. CF(1) has five subunits: alpha(3), beta(3), gamma(1), delta(1), epsilon(1). CF(0) has four main subunits: a, b, b' and c.

The protein resides in the plastid. It is found in the chloroplast thylakoid membrane. It carries out the reaction ATP + H2O + 4 H(+)(in) = ADP + phosphate + 5 H(+)(out). Its function is as follows. Produces ATP from ADP in the presence of a proton gradient across the membrane. The alpha chain is a regulatory subunit. The sequence is that of ATP synthase subunit alpha, chloroplastic from Ranunculus macranthus (Large buttercup).